Here is a 350-residue protein sequence, read N- to C-terminus: Anthranilate phosphoribosyltransferase (350 aa).

5-phospho-alpha-D-ribose 1-diphosphate-binding positions include Gly-94, 97–98 (GS), Thr-102, 104–107 (NVST), 122–130 (KHGNRSVSS), and Ser-134. Gly-94 is a binding site for anthranilate. Ser-106 is a binding site for Mg(2+). Anthranilate is bound at residue Asn-125. Residue Arg-180 participates in anthranilate binding. Residues Asp-239 and Glu-240 each contribute to the Mg(2+) site.

This sequence belongs to the anthranilate phosphoribosyltransferase family. As to quaternary structure, homodimer. It depends on Mg(2+) as a cofactor.

It carries out the reaction N-(5-phospho-beta-D-ribosyl)anthranilate + diphosphate = 5-phospho-alpha-D-ribose 1-diphosphate + anthranilate. It participates in amino-acid biosynthesis; L-tryptophan biosynthesis; L-tryptophan from chorismate: step 2/5. Functionally, catalyzes the transfer of the phosphoribosyl group of 5-phosphorylribose-1-pyrophosphate (PRPP) to anthranilate to yield N-(5'-phosphoribosyl)-anthranilate (PRA). The sequence is that of Anthranilate phosphoribosyltransferase from Geotalea uraniireducens (strain Rf4) (Geobacter uraniireducens).